Here is a 472-residue protein sequence, read N- to C-terminus: NADH-quinone oxidoreductase subunit N 2 (472 aa).

13 consecutive transmembrane segments (helical) span residues 3-23 (WMSFAPELITLTSALWFLLLS), 34-54 (HVAALVLSALGLAACLASVGA), 67-87 (LFSQVFKVLLAAGLFLIVTLC), 106-126 (FVCTLAMMLLVGANHFLVVFI), 156-176 (FLVGIFASGVMIFGLALLYGA), 198-218 (VVIGLLLTLSGFFFKLAVFPF), 233-253 (VSAYIATASKVAAIGVLVRVI), 263-283 (LVHVLAVLSVVSMTVGNLAAI), 291-311 (LLAYSTVAHAGYVLIGVLSMN), 317-337 (AAVFYAFALLVMKFTAFLVLV), 360-380 (ILALALMVSLFSLAGIPPTVG), 398-418 (TLVLIAMINVVISLYYYLLVI), and 441-461 (LLSGVLVIAMVAAGFFPNQII).

The protein belongs to the complex I subunit 2 family. In terms of assembly, NDH-1 is composed of 14 different subunits. Subunits NuoA, H, J, K, L, M, N constitute the membrane sector of the complex.

Its subcellular location is the cell inner membrane. It carries out the reaction a quinone + NADH + 5 H(+)(in) = a quinol + NAD(+) + 4 H(+)(out). Functionally, NDH-1 shuttles electrons from NADH, via FMN and iron-sulfur (Fe-S) centers, to quinones in the respiratory chain. The immediate electron acceptor for the enzyme in this species is believed to be ubiquinone. Couples the redox reaction to proton translocation (for every two electrons transferred, four hydrogen ions are translocated across the cytoplasmic membrane), and thus conserves the redox energy in a proton gradient. This Syntrophobacter fumaroxidans (strain DSM 10017 / MPOB) protein is NADH-quinone oxidoreductase subunit N 2.